The sequence spans 415 residues: Serine hydroxymethyltransferase (415 aa).

(6S)-5,6,7,8-tetrahydrofolate contacts are provided by residues L117 and 121–123 (GHL). Position 226 is an N6-(pyridoxal phosphate)lysine (K226). (6S)-5,6,7,8-tetrahydrofolate contacts are provided by residues E241 and 349–351 (SPF).

This sequence belongs to the SHMT family. In terms of assembly, homodimer. The cofactor is pyridoxal 5'-phosphate.

The protein resides in the cytoplasm. The enzyme catalyses (6R)-5,10-methylene-5,6,7,8-tetrahydrofolate + glycine + H2O = (6S)-5,6,7,8-tetrahydrofolate + L-serine. It participates in one-carbon metabolism; tetrahydrofolate interconversion. The protein operates within amino-acid biosynthesis; glycine biosynthesis; glycine from L-serine: step 1/1. In terms of biological role, catalyzes the reversible interconversion of serine and glycine with tetrahydrofolate (THF) serving as the one-carbon carrier. This reaction serves as the major source of one-carbon groups required for the biosynthesis of purines, thymidylate, methionine, and other important biomolecules. Also exhibits THF-independent aldolase activity toward beta-hydroxyamino acids, producing glycine and aldehydes, via a retro-aldol mechanism. In Geobacter metallireducens (strain ATCC 53774 / DSM 7210 / GS-15), this protein is Serine hydroxymethyltransferase.